We begin with the raw amino-acid sequence, 51 residues long: Large ribosomal subunit protein eL39 (51 aa).

This sequence belongs to the eukaryotic ribosomal protein eL39 family. Part of the 50S ribosomal subunit.

The chain is Large ribosomal subunit protein eL39 from Pyrococcus furiosus (strain ATCC 43587 / DSM 3638 / JCM 8422 / Vc1).